Reading from the N-terminus, the 381-residue chain is Succinyl-diaminopimelate desuccinylase (381 aa).

Residue H71 coordinates Zn(2+). D73 is a catalytic residue. D104 provides a ligand contact to Zn(2+). E136 serves as the catalytic Proton acceptor. 3 residues coordinate Zn(2+): E137, E166, and H351.

This sequence belongs to the peptidase M20A family. DapE subfamily. Homodimer. The cofactor is Zn(2+). Co(2+) is required as a cofactor.

The catalysed reaction is N-succinyl-(2S,6S)-2,6-diaminopimelate + H2O = (2S,6S)-2,6-diaminopimelate + succinate. The protein operates within amino-acid biosynthesis; L-lysine biosynthesis via DAP pathway; LL-2,6-diaminopimelate from (S)-tetrahydrodipicolinate (succinylase route): step 3/3. Functionally, catalyzes the hydrolysis of N-succinyl-L,L-diaminopimelic acid (SDAP), forming succinate and LL-2,6-diaminopimelate (DAP), an intermediate involved in the bacterial biosynthesis of lysine and meso-diaminopimelic acid, an essential component of bacterial cell walls. In Ehrlichia chaffeensis (strain ATCC CRL-10679 / Arkansas), this protein is Succinyl-diaminopimelate desuccinylase.